Here is a 269-residue protein sequence, read N- to C-terminus: MFDFMTLEKVREKGPLVHNITNIVVANDSANGLLAIGASPIMASAKEEMDELAKMADVLVINIGTLDGELVTAMKIAGRAANVAGTPVVLDPVGVGATSYRRKVVQELLAEIQFAAIRGNAGELAAIAGEAWEAKGVDAGVGSADVLSIAGKVANEWSTVVIISGEVDVISDGTRFAKVANGSALLPRITGSGCLLSAVCGSFIAVQDDAFRASVEACASYAVASEYAEMELERKLPGSFRPLFLDALASWSVEKTRAKAKIQESGEHK.

M42 is a substrate binding site. 2 residues coordinate ATP: R118 and S164. G191 is a substrate binding site.

This sequence belongs to the Thz kinase family. It depends on Mg(2+) as a cofactor.

It carries out the reaction 5-(2-hydroxyethyl)-4-methylthiazole + ATP = 4-methyl-5-(2-phosphooxyethyl)-thiazole + ADP + H(+). The protein operates within cofactor biosynthesis; thiamine diphosphate biosynthesis; 4-methyl-5-(2-phosphoethyl)-thiazole from 5-(2-hydroxyethyl)-4-methylthiazole: step 1/1. Its function is as follows. Catalyzes the phosphorylation of the hydroxyl group of 4-methyl-5-beta-hydroxyethylthiazole (THZ). The chain is Hydroxyethylthiazole kinase from Listeria monocytogenes serovar 1/2a (strain ATCC BAA-679 / EGD-e).